The primary structure comprises 301 residues: ATP synthase gamma chain (301 aa).

Belongs to the ATPase gamma chain family. As to quaternary structure, F-type ATPases have 2 components, CF(1) - the catalytic core - and CF(0) - the membrane proton channel. CF(1) has five subunits: alpha(3), beta(3), gamma(1), delta(1), epsilon(1). CF(0) has three main subunits: a, b and c.

The protein localises to the cell inner membrane. In terms of biological role, produces ATP from ADP in the presence of a proton gradient across the membrane. The gamma chain is believed to be important in regulating ATPase activity and the flow of protons through the CF(0) complex. The polypeptide is ATP synthase gamma chain (Helicobacter pylori (strain P12)).